Here is a 289-residue protein sequence, read N- to C-terminus: D-alanine aminotransferase (289 aa).

Y31 provides a ligand contact to substrate. Residue R50 participates in pyridoxal 5'-phosphate binding. Positions 99 and 101 each coordinate substrate. Residue K147 is modified to N6-(pyridoxal phosphate)lysine. E179 provides a ligand contact to pyridoxal 5'-phosphate.

The protein belongs to the class-IV pyridoxal-phosphate-dependent aminotransferase family. In terms of assembly, homodimer. Pyridoxal 5'-phosphate serves as cofactor.

The enzyme catalyses D-alanine + 2-oxoglutarate = D-glutamate + pyruvate. In terms of biological role, acts on the D-isomers of alanine, leucine, aspartate, glutamate, aminobutyrate, norvaline and asparagine. The enzyme transfers an amino group from a substrate D-amino acid to the pyridoxal phosphate cofactor to form pyridoxamine and an alpha-keto acid in the first half-reaction. The second half-reaction is the reverse of the first, transferring the amino group from the pyridoxamine to a second alpha-keto acid to form the product D-amino acid via a ping-pong mechanism. This is an important process in the formation of D-alanine and D-glutamate, which are essential bacterial cell wall components. This chain is D-alanine aminotransferase (dat), found in Listeria monocytogenes serotype 1/2a (strain 10403S).